We begin with the raw amino-acid sequence, 347 residues long: MNPLIFSTILATIIMGTAIVMTSSHWLTIWIGFEMNMLAIIPMLMKQHNPRSTEAATKYFLTQATASMLLMLAVIMNLTHTGQWTITKSFNPLASIIMTIALTMKLGLSPFHFWVPEVAQGIPLSSCLILLTWQKLAPLSILYMISPTINLNLLLSMSLISVAIGGWGGLNQTQLRKIMAYSSIAHMGWMTAILAYNPTMTMLNLLVYITMTTTMFMLLIKSASTTTLSLAIMWNKVPLVTTLTLTIMLSLGGLPPLTGFLPKWMIIQELTKNNNIIMPTLMAIMALLSLYFYMRLTYATTLTMFPTTNNMKMKWQFEPKKHMNLLSPLIVMSTLTLPLAPMMSLLD.

A run of 11 helical transmembrane segments spans residues Met1–Met21, His25–Met45, Tyr59–Thr79, Ile96–Pro116, Cys127–Pro147, Ile149–Gly169, Ile178–Pro198, Met200–Ile220, Ile247–Ile267, Ile276–Leu296, and Leu325–Leu345.

Belongs to the complex I subunit 2 family. Core subunit of respiratory chain NADH dehydrogenase (Complex I) which is composed of 45 different subunits. Interacts with TMEM242.

Its subcellular location is the mitochondrion inner membrane. The catalysed reaction is a ubiquinone + NADH + 5 H(+)(in) = a ubiquinol + NAD(+) + 4 H(+)(out). Functionally, core subunit of the mitochondrial membrane respiratory chain NADH dehydrogenase (Complex I) which catalyzes electron transfer from NADH through the respiratory chain, using ubiquinone as an electron acceptor. Essential for the catalytic activity and assembly of complex I. This Natalus stramineus (Mexican funnel-eared bat) protein is NADH-ubiquinone oxidoreductase chain 2.